The primary structure comprises 149 residues: Transcriptional repressor NrdR (149 aa).

A zinc finger lies at 3 to 34; it reads CPFCSATDTKVIDSRLVADGHQVRRRRECVQC. Positions 49 to 139 constitute an ATP-cone domain; the sequence is PRVVKQDGSR…VYRAFEDVSE (91 aa).

It belongs to the NrdR family. It depends on Zn(2+) as a cofactor.

Its function is as follows. Negatively regulates transcription of bacterial ribonucleotide reductase nrd genes and operons by binding to NrdR-boxes. This is Transcriptional repressor NrdR from Shewanella pealeana (strain ATCC 700345 / ANG-SQ1).